We begin with the raw amino-acid sequence, 1368 residues long: MQYSFTEKKRIRKSFAKRPIVHQVPFLLATQLESFSTFLQADVPATQRKPEGLQAAFTSVFPIVSHNGFARLEFVSYALSSPAFNIKECQQRGLTYCSALRAKVRLVILDKESPNKPVVKEVKEQEVYMGEIPLMTPTGSFVINGTERVIVSQLHRSPGVFFEHDKGKTHSSGKLLFSARIIPYRGSWLDFEFDPKDILYFRVDRRRKMPVTILLKAIGLTPEQILANFFVFDNFTLMDEGAQLEFVPERLRGEVARFDITDRDGKVIVQKDKRINAKHIRDLEAAKTKFISVPEDYLLGRVLAKNVVDGDTGEVIASANDEVTESVLEKLREAGIKDIQTLYTNDLDQGPYISSTLRVDETTDKTAARIAIHRMMRPGEPPTEEAVEALFNRLFYSEEAYDLSKVGRMKFNRRVGRDEIVGPMTLQDDDILATIKILVELRNGKGEVDDIDHLGNRRVRCVGELAENQFRAGLVRVERAVKERLGQAESENLMPHDLINSKPISSAIREFFGSSQLSQFMDQTNPLSEITHKRRVSALGPGGLTRERAGFEVRDVHPTHYGRVCPIETPEGPNIGLINSLALYAHLNEYGFLETPYRKVVDSKVTDQIDYLSAIEEGRYMIAQANAAIDEDGRLIDELVSSREAGETMMVTPDRIQYMDVAPSQIVSVAASLIPFLEHDDANRALMGSNMQRQAVPCLRPEKPVVGTGIERTCAVDSGTTVQAFRGGVVDYVDAGRIVIRVNDDEAVAGEVGVDIYNLIKYTRSNQNTNINQRPIVKMGDKVSRGDVLADGASTDLGELALGQNMLIAFMPWNGYNFEDSILISEKVVADDRYTSIHIEELNVVARDTKLGPEEITRDISNLAEVQLGRLDESGIVYIGAEVEAGDVLVGKVTPKGETQLTPEEKLLRAIFGEKASDVKDTSLRVPSGMSGTVIDVQVFTREGIQRDKRAQQIIDDELKRYRLDLNDQLRIVEGDAFQRLARMLVGKVANGGPKKLAKGTKIDQAYLEDLDHYHWFDIRLADDEAAASLEAIKNSIEEKRHQFDLAFEEKRKKLTQGDELPPGVLKMVKVYLAVKRRLQPGDKMAGRHGNKGVVSKIVPIEDMPYMADGRPADVVLNPLGVPSRMNVGQVLEVHLGWAAKGLGWRIGEMLQRQAKIEELRTFLTKIYNESGRQEDLESFTDDEILELAKNLREGVPFATPVFDGATEEEMGKMLDLAFPDDIAEQLGMNPSKNQVRLYDGRTGEMFERRVTLGYMHYLKLHHLVDDKMHARSTGPYSLVTQQPLGGKAQFGGQRFGEMEVWALEAYGASYVLQEMLTVKSDDVTGRTKVYENLVKGDHVIDAGMPESFNVLVKEIRSLGIDIDLDRN.

This sequence belongs to the RNA polymerase beta chain family. In terms of assembly, the RNAP catalytic core consists of 2 alpha, 1 beta, 1 beta' and 1 omega subunit. When a sigma factor is associated with the core the holoenzyme is formed, which can initiate transcription.

The enzyme catalyses RNA(n) + a ribonucleoside 5'-triphosphate = RNA(n+1) + diphosphate. Its function is as follows. DNA-dependent RNA polymerase catalyzes the transcription of DNA into RNA using the four ribonucleoside triphosphates as substrates. This Burkholderia cenocepacia (strain ATCC BAA-245 / DSM 16553 / LMG 16656 / NCTC 13227 / J2315 / CF5610) (Burkholderia cepacia (strain J2315)) protein is DNA-directed RNA polymerase subunit beta.